Consider the following 100-residue polypeptide: Small ribosomal subunit protein uS14c (100 aa).

This sequence belongs to the universal ribosomal protein uS14 family. Part of the 30S ribosomal subunit.

It localises to the plastid. The protein localises to the chloroplast. Its function is as follows. Binds 16S rRNA, required for the assembly of 30S particles. In Capsella bursa-pastoris (Shepherd's purse), this protein is Small ribosomal subunit protein uS14c.